The primary structure comprises 223 residues: Probable transaldolase (223 aa).

The active-site Schiff-base intermediate with substrate is K91.

The protein belongs to the transaldolase family. Type 3B subfamily.

It is found in the cytoplasm. The catalysed reaction is D-sedoheptulose 7-phosphate + D-glyceraldehyde 3-phosphate = D-erythrose 4-phosphate + beta-D-fructose 6-phosphate. It participates in carbohydrate degradation; pentose phosphate pathway; D-glyceraldehyde 3-phosphate and beta-D-fructose 6-phosphate from D-ribose 5-phosphate and D-xylulose 5-phosphate (non-oxidative stage): step 2/3. Its function is as follows. Transaldolase is important for the balance of metabolites in the pentose-phosphate pathway. The protein is Probable transaldolase of Prosthecochloris aestuarii (strain DSM 271 / SK 413).